The chain runs to 284 residues: 4-diphosphocytidyl-2-C-methyl-D-erythritol kinase (284 aa).

Residue Lys14 is part of the active site. Residue 98-108 (PMGGGLGGGSS) participates in ATP binding. The active site involves Asp140.

This sequence belongs to the GHMP kinase family. IspE subfamily.

It carries out the reaction 4-CDP-2-C-methyl-D-erythritol + ATP = 4-CDP-2-C-methyl-D-erythritol 2-phosphate + ADP + H(+). The protein operates within isoprenoid biosynthesis; isopentenyl diphosphate biosynthesis via DXP pathway; isopentenyl diphosphate from 1-deoxy-D-xylulose 5-phosphate: step 3/6. In terms of biological role, catalyzes the phosphorylation of the position 2 hydroxy group of 4-diphosphocytidyl-2C-methyl-D-erythritol. The protein is 4-diphosphocytidyl-2-C-methyl-D-erythritol kinase of Shewanella baltica (strain OS155 / ATCC BAA-1091).